Consider the following 214-residue polypeptide: Riboflavin kinase (214 aa).

The tract at residues 1 to 26 (MRPDGPRDPVAGPDSGPEPPYPVRLS) is disordered. Positions 44 and 46 each coordinate Mg(2+). Glu116 acts as the Nucleophile in catalysis.

It belongs to the flavokinase family. Zn(2+) serves as cofactor. It depends on Mg(2+) as a cofactor.

The catalysed reaction is riboflavin + ATP = FMN + ADP + H(+). Its pathway is cofactor biosynthesis; FMN biosynthesis; FMN from riboflavin (ATP route): step 1/1. Its function is as follows. Catalyzes the phosphorylation of riboflavin (vitamin B2) to form flavin mononucleotide (FMN) coenzyme. The sequence is that of Riboflavin kinase (fmn1) from Aspergillus fumigatus (strain ATCC MYA-4609 / CBS 101355 / FGSC A1100 / Af293) (Neosartorya fumigata).